Consider the following 938-residue polypeptide: Myocardin (938 aa).

An MEF2C-binding motif is present at residues 12-27 (IRRKFRSVLQLRLQQR). RPEL repeat units follow at residues 18 to 43 (SVLQ…PPLK), 62 to 87 (DSLR…QAST), and 106 to 131 (DDLN…PMDS). The segment at 37–64 (GLIPPLKSPTEFHDPRKKLDSAKTEDSL) is disordered. A compositionally biased stretch (basic and acidic residues) spans 46–64 (TEFHDPRKKLDSAKTEDSL). The interval 153–205 (FEDDSSRDGLSPDQARSEDPQGSGGSTPDIKSTEAPLAGPLDTIQDLTPGSES) is HDAC5-binding. 2 disordered regions span residues 155–282 (DDSS…PPPM) and 339–381 (NEQM…PLPP). A compositionally biased stretch (polar residues) spans 210 to 221 (TASQLSNQSDSG). Residues 248 to 265 (NRHKKPKDPKPKVKKLKY) show a composition bias toward basic residues. Residues 345 to 360 (NPNSSSTPLNNTPLSP) are compositionally biased toward low complexity. The segment covering 361 to 372 (VKNSLSGQTGVS) has biased composition (polar residues). The 35-residue stretch at 383 to 417 (LDDLKVSELRQQLRIRGLPVSGTKTALVDRLRPFQ) folds into the SAP domain. 4 positions are modified to phosphoserine; by GSK3-beta: serine 457, serine 461, serine 465, and serine 469. Residues 501-521 (ESLLSSLNGGSGPSEPDGLDS) are disordered. Residues 522 to 566 (EKDKMLVEKQKVINQLTWKLRQEQRQVEELRMQLQKQKSGCNDQK) are a coiled coil. Residues 586–606 (AAQQASGKGQGHSSDSPPPAC) are disordered. Over residues 588-600 (QQASGKGQGHSSD) the composition is skewed to polar residues. Residues serine 627, serine 631, serine 635, and serine 639 each carry the phosphoserine; by GSK3-beta modification. Composition is skewed to polar residues over residues 667–694 (GAQR…QSSD) and 701–713 (SIPS…SSPT). The interval 667–734 (GAQRENHGVS…DAVKQQMTRS (68 aa)) is disordered. Positions 717–938 (ITQPPSYEDA…SPMDLHLQQW (222 aa)) are required for interaction with and ubiquitination by STUB1. A phosphoserine; by MAPK1 and MAPK3 mark is found at serine 815, serine 862, and serine 869. At threonine 896 the chain carries Phosphothreonine; by MAPK1 and MAPK3.

In terms of assembly, homodimer. Interacts with MLLT7/FOXO4. Interacts with SRF, its association does not depend on specific DNA sequences for ternary complex formation. Interacts (via C-terminal) with EP300 (via the CREB-binding domain). Interacts with HDAC4 and HDAC5. Interacts with MEF2C. Interacts (via C-terminus) with STUB1/CHIP. Interacts with PURB. In terms of processing, ubiquitinated; by STUB1/CHIP at the C-terminus, leading to its degradation by the proteasome. Phosphorylation by GSK3B is required for STUB1/CHIP-mediated ubiquitination. Phosphorylation negatively regulates transcriptional activity. Phosphorylated; by GSK3B. As to expression, abundantly expressed in the heart, aorta media and bladder, weakly expressed in the stomach, intestine and lung.

It localises to the nucleus. Functionally, smooth muscle cells (SM) and cardiac muscle cells-specific transcriptional factor which uses the canonical single or multiple CArG boxes DNA sequence. Acts as a cofactor of serum response factor (SRF) with the potential to modulate SRF-target genes. Plays a crucial role in cardiogenesis, urinary bladder development, and differentiation of the smooth muscle cell lineage (myogenesis). Positively regulates the transcription of genes involved in vascular smooth muscle contraction. This is Myocardin (Myocd) from Rattus norvegicus (Rat).